A 640-amino-acid polypeptide reads, in one-letter code: 1,4-alpha-glucan branching enzyme GlgB (640 aa).

The Nucleophile role is filled by aspartate 317. Catalysis depends on glutamate 370, which acts as the Proton donor.

This sequence belongs to the glycosyl hydrolase 13 family. GlgB subfamily. In terms of assembly, monomer.

It catalyses the reaction Transfers a segment of a (1-&gt;4)-alpha-D-glucan chain to a primary hydroxy group in a similar glucan chain.. It functions in the pathway glycan biosynthesis; glycogen biosynthesis. Its function is as follows. Catalyzes the formation of the alpha-1,6-glucosidic linkages in glycogen by scission of a 1,4-alpha-linked oligosaccharide from growing alpha-1,4-glucan chains and the subsequent attachment of the oligosaccharide to the alpha-1,6 position. The sequence is that of 1,4-alpha-glucan branching enzyme GlgB from Nitratidesulfovibrio vulgaris (strain ATCC 29579 / DSM 644 / CCUG 34227 / NCIMB 8303 / VKM B-1760 / Hildenborough) (Desulfovibrio vulgaris).